We begin with the raw amino-acid sequence, 95 residues long: Antitoxin TacA1 (95 aa).

The neutralization domain stretch occupies residues 59–95; that stretch reads FNFNDEQYEEFINLLDAPVADDPVIEKLLARKPQWDV.

This sequence belongs to the TacA antitoxin family. In terms of assembly, homodimer. Forms a complex with cognate toxin TacT1. Forms a 4:2 antitoxin:toxin complex with cognate toxin TacT1.

In terms of biological role, antitoxin component of a type II toxin-antitoxin (TA) system. Counteracts the toxic effect of cognate toxin TacT1 (T8), but not TacT2 or TacT3. Plays a role in persister cell formation. Functionally, the TacA1-TacT1 complex binds (and probably represses) its own promoter DNA but not that of tacA3-tacT3, it does not repress the tacA3-tacT3 promoter. The chain is Antitoxin TacA1 from Salmonella typhimurium (strain 14028s / SGSC 2262).